We begin with the raw amino-acid sequence, 64 residues long: Large ribosomal subunit protein bL35 (64 aa).

This sequence belongs to the bacterial ribosomal protein bL35 family.

The protein is Large ribosomal subunit protein bL35 of Colwellia psychrerythraea (strain 34H / ATCC BAA-681) (Vibrio psychroerythus).